The following is a 146-amino-acid chain: Hemoglobin subunit beta (146 aa).

The 145-residue stretch at 2–146 folds into the Globin domain; it reads HWTAEEKQLI…VAHALARKYH (145 aa). Histidine 63 and histidine 92 together coordinate heme b.

This sequence belongs to the globin family. As to quaternary structure, heterotetramer of two alpha chains and two beta chains. In terms of tissue distribution, red blood cells.

In terms of biological role, involved in oxygen transport from the lung to the various peripheral tissues. In Anas platyrhynchos platyrhynchos (Northern mallard), this protein is Hemoglobin subunit beta (HBB).